Consider the following 174-residue polypeptide: Centrosomal protein 20 (174 aa).

The segment at 1–104 (MATVAELKAV…AFEESKDNTI (104 aa)) is necessary and sufficient for homooligomerization and localization to centrosomes and pericentriolar satellites. Residues 49–81 (ENLLINELIREYLEFNKYKYTASVLIAESGQPV) form the LisH domain. The interval 129–174 (GPSLQPSDPSLGRQPSRRKPMDDHLRKEEQKSTNIEDLHVSQAVNR) is disordered. Serine 144 carries the phosphoserine modification. Over residues 147–167 (KPMDDHLRKEEQKSTNIEDLH) the composition is skewed to basic and acidic residues.

The protein belongs to the CEP43 family. In terms of assembly, homooligomer; probably required for localization to centrosomes. Forms a complex with KIAA0753/OFIP and OFD1; within this complex may stabilize the interaction between OFD1 and KIAA0753/OFIP. Interacts with PCM1; this interaction may be mediated by KIAA0753/OFIP. Interacts with PLK1 in later G1, S, G2 and M phases of the cell cycle; this interaction recruits PLK1 to centrosomes. Widely expressed. Detected in brain, heart, kidney, liver, lung, skeletal muscle, placenta and intestine.

The protein resides in the cytoplasm. It is found in the cytoskeleton. Its subcellular location is the microtubule organizing center. It localises to the centrosome. The protein localises to the centriole. The protein resides in the cell projection. It is found in the cilium. Its subcellular location is the cilium basal body. It localises to the cytoplasmic granule. The protein localises to the centriolar satellite. Involved in the biogenesis of cilia. Required for the recruitment of PLK1 to centrosomes and S phase progression. The sequence is that of Centrosomal protein 20 from Homo sapiens (Human).